The primary structure comprises 910 residues: ZZ-type zinc finger-containing protein 3 (910 aa).

Disordered regions lie at residues 41–117 (AHPE…RQAE) and 133–153 (EATNSSEEDSPVKPDKEPGEH). Over residues 67-84 (QKGTNNGRTSDVRQQSAR) the composition is skewed to polar residues. Residues Ser89, Ser96, Ser137, Ser138, and Ser142 each carry the phosphoserine modification. The segment covering 96–116 (SSSEKDDLERQALESCERRQA) has biased composition (basic and acidic residues). Basic and acidic residues predominate over residues 142–153 (SPVKPDKEPGEH). A Glycyl lysine isopeptide (Lys-Gly) (interchain with G-Cter in SUMO2) cross-link involves residue Lys283. Disordered stretches follow at residues 303-358 (TAES…VSGE), 373-444 (TSLS…PQDG), and 609-641 (ARPKSPLDPKKDGESLSYSMLPLSDGPEGSHNR). 2 stretches are compositionally biased toward polar residues: residues 331 to 347 (SSASKEQCNENSSNPLD) and 397 to 434 (SSPTKTTSPYRENGQLEETNLSPQETNTTVSDHVSESP). Lys401 bears the N6-acetyllysine mark. Ser613 bears the Phosphoserine mark. The span at 613–622 (SPLDPKKDGE) shows a compositional bias: basic and acidic residues. Lys654 participates in a covalent cross-link: Glycyl lysine isopeptide (Lys-Gly) (interchain with G-Cter in SUMO2). Residues 654–714 (KPETFNQLWT…RVQKYFIKLT (61 aa)) form the HTH myb-type domain. Positions 687-710 (WQKIADELGNRTAKQVASRVQKYF) form a DNA-binding region, H-T-H motif. Lys708 carries the N6-acetyllysine modification. Lys715 is covalently cross-linked (Glycyl lysine isopeptide (Lys-Gly) (interchain with G-Cter in SUMO2)). A ZZ-type zinc finger spans residues 825 to 884 (HVGFKCDNCGVEPIQGVRWHCQDCPPEMSLDFCDSCSDCPHETDIHKEDHQLEPVYKSET). Positions 830, 833, 845, 848, 857, 860, 870, and 874 each coordinate Zn(2+).

In terms of assembly, component of the ADA2A-containing complex (ATAC), composed of KAT14, KAT2A, TADA2L, TADA3L, ZZ3, MBIP, WDR5, YEATS2, CCDC101 and DR1. Interacts via (ZZ-type zinc finger) with histone H3 in a methylation-independent manner and acetylation on 'Lys-4' (H3K4ac) moderately enhances the interaction.

The protein resides in the nucleus. Its function is as follows. Histone H3 reader that is required for the ATAC complex-mediated maintenance of histone acetylation and gene activation. Component of the ATAC complex, a complex with histone acetyltransferase activity on histones H3 and H4. The chain is ZZ-type zinc finger-containing protein 3 (Zzz3) from Mus musculus (Mouse).